The following is an 862-amino-acid chain: uncharacterized protein (862 aa).

Disordered stretches follow at residues 45 to 91 (HPPV…PDEV), 633 to 824 (RAEQ…GDDD), and 837 to 862 (GGSG…LLLS). Composition is skewed to acidic residues over residues 57-69 (MDVD…EKDE) and 78-91 (PEVE…PDEV). Basic and acidic residues-rich tracts occupy residues 633 to 650 (RAEQ…DAAK), 657 to 686 (REAE…KAEK), and 694 to 703 (TKKEKTEKKT). Over residues 751-760 (EKKKRTAAKK) the composition is skewed to basic residues. Residues 761–779 (KTVDRPSGHRPSSKKEYRS) show a composition bias toward basic and acidic residues.

This is an uncharacterized protein from Ictaluridae (bullhead catfishes).